We begin with the raw amino-acid sequence, 255 residues long: 5'-nucleotidase SurE (255 aa).

Positions 8, 9, 40, and 92 each coordinate a divalent metal cation.

This sequence belongs to the SurE nucleotidase family. A divalent metal cation serves as cofactor.

It localises to the cytoplasm. It carries out the reaction a ribonucleoside 5'-phosphate + H2O = a ribonucleoside + phosphate. In terms of biological role, nucleotidase that shows phosphatase activity on nucleoside 5'-monophosphates. The chain is 5'-nucleotidase SurE from Brucella suis (strain ATCC 23445 / NCTC 10510).